Consider the following 271-residue polypeptide: DNA repair protein RecO (271 aa).

The disordered stretch occupies residues 248–271; sequence AVGVEDSVRQDGDRDSTTRTPSSA. Residues 253–264 are compositionally biased toward basic and acidic residues; the sequence is DSVRQDGDRDST.

This sequence belongs to the RecO family.

Functionally, involved in DNA repair and RecF pathway recombination. This is DNA repair protein RecO from Rhodococcus opacus (strain B4).